We begin with the raw amino-acid sequence, 324 residues long: Short-chain dehydrogenase/reductase iacJ (324 aa).

NADP(+) contacts are provided by Ile-42, Lys-66, Asp-93, Asn-120, Tyr-204, Lys-208, and Thr-239. Tyr-204 serves as the catalytic Proton donor. Lys-208 (lowers pKa of active site Tyr) is an active-site residue.

This sequence belongs to the short-chain dehydrogenases/reductases (SDR) family.

It functions in the pathway secondary metabolite biosynthesis. Short-chain dehydrogenase/reductase; part of the gene cluster that mediates the biosynthesis of iso-A82775C, a enylepoxycyclohexane and biosynthetic precursor of the chloropestolide anticancer natural products. Within the cluster, the prenyltransferase iacE prenylates siccayne to generate pestalodiol E, using dimethylallyl diphosphate (DMAPP) as cosubstrate. The probable oxidoreductase iacF is then involved in the epoxidation of pestalodiol F to pestalodiol F, which is further converted to pestalofone A by the short-chain dehydrogenase/reductase iacG. Iso-A82775C is subsequently generated from pestalofone A by the short-chain dehydrogenase/reductase iacC. Iso-A82775C is further condensed with maldoxin via a Diels-Alder reaction to produce the anticancer natural products chloropestolides A to E. This is Short-chain dehydrogenase/reductase iacJ from Pestalotiopsis fici (strain W106-1 / CGMCC3.15140).